The chain runs to 467 residues: tRNA-2-methylthio-N(6)-dimethylallyladenosine synthase (467 aa).

In terms of domain architecture, MTTase N-terminal spans 5–125; it reads RKLHIKSYGC…LPQLLAQASR (121 aa). The [4Fe-4S] cluster site is built by C14, C50, C88, C166, C170, and C173. A Radical SAM core domain is found at 152-384; sequence RARGVSAFVT…QSLIDSQQAA (233 aa). Positions 387 to 449 constitute a TRAM domain; the sequence is KAAIGSVVDV…RYSLLGELVA (63 aa).

It belongs to the methylthiotransferase family. MiaB subfamily. In terms of assembly, monomer. The cofactor is [4Fe-4S] cluster.

It is found in the cytoplasm. The catalysed reaction is N(6)-dimethylallyladenosine(37) in tRNA + (sulfur carrier)-SH + AH2 + 2 S-adenosyl-L-methionine = 2-methylsulfanyl-N(6)-dimethylallyladenosine(37) in tRNA + (sulfur carrier)-H + 5'-deoxyadenosine + L-methionine + A + S-adenosyl-L-homocysteine + 2 H(+). Functionally, catalyzes the methylthiolation of N6-(dimethylallyl)adenosine (i(6)A), leading to the formation of 2-methylthio-N6-(dimethylallyl)adenosine (ms(2)i(6)A) at position 37 in tRNAs that read codons beginning with uridine. The sequence is that of tRNA-2-methylthio-N(6)-dimethylallyladenosine synthase from Bradyrhizobium sp. (strain ORS 278).